Reading from the N-terminus, the 78-residue chain is Large ribosomal subunit protein bL31 (78 aa).

Belongs to the bacterial ribosomal protein bL31 family. Type A subfamily. As to quaternary structure, part of the 50S ribosomal subunit.

Functionally, binds the 23S rRNA. The chain is Large ribosomal subunit protein bL31 from Rickettsia prowazekii (strain Madrid E).